We begin with the raw amino-acid sequence, 400 residues long: S-adenosylmethionine synthase (400 aa).

Residue 136–141 coordinates ATP; it reads GTGSTD.

Belongs to the AdoMet synthase 2 family. Requires Mg(2+) as cofactor.

It carries out the reaction L-methionine + ATP + H2O = S-adenosyl-L-methionine + phosphate + diphosphate. Its pathway is amino-acid biosynthesis; S-adenosyl-L-methionine biosynthesis; S-adenosyl-L-methionine from L-methionine: step 1/1. In terms of biological role, catalyzes the formation of S-adenosylmethionine from methionine and ATP. This Methanoregula boonei (strain DSM 21154 / JCM 14090 / 6A8) protein is S-adenosylmethionine synthase.